An 878-amino-acid chain; its full sequence is E3 ubiquitin-protein ligase SH3RF3 (878 aa).

Residues 19–40 (RGEGEDRQGEQQRGAQARTEED) are disordered. Residues 52–93 (CSVCLERLDTTAKVLPCQHTFCRRCLESIVCSRHELRCPECR) form an RING-type zinc finger. Positions 120–145 (PRTGASPGSSPPARPGPGTFSALAGG) are disordered. 2 consecutive SH3 domains span residues 187–246 (SQLP…CVRP) and 249–312 (QALP…LNDS). The tract at residues 364-433 (RVDSKKNAKK…TVPTQDSSSA (70 aa)) is interaction with RAC1. Ser-395 carries the phosphoserine modification. In terms of domain architecture, SH3 3 spans 458–519 (LPLNVYLALY…PGNYVTPVSR (62 aa)). 2 disordered regions span residues 574–659 (QHPA…CPRP) and 688–758 (PISG…MGPE). 4 stretches are compositionally biased toward polar residues: residues 590–609 (AQPT…THAS), 618–633 (ATVS…SRLP), 643–653 (ASPQHGQQSPA), and 690–699 (SGLSTPSLIN). Positions 703 to 716 (KPDDKKNEKKEKKS) are enriched in basic and acidic residues. Positions 741–752 (HDPQSAMDTSLQ) are enriched in polar residues. Ser-792 is modified (phosphoserine). The region spanning 819 to 878 (LPRERYRVVVSYPPQSEAEIELKEGDIVFVHKKHEDGWFKGTLQRNGRTGLFPGSFVESF) is the SH3 4 domain.

This sequence belongs to the SH3RF family. In terms of assembly, interacts (via SH3 domain 3) with PAK2. Interacts with RAC1 (GTP-bound form). Autoubiquitinated.

The enzyme catalyses S-ubiquitinyl-[E2 ubiquitin-conjugating enzyme]-L-cysteine + [acceptor protein]-L-lysine = [E2 ubiquitin-conjugating enzyme]-L-cysteine + N(6)-ubiquitinyl-[acceptor protein]-L-lysine.. It functions in the pathway protein modification; protein ubiquitination. In terms of biological role, has E3 ubiquitin-protein ligase activity. This chain is E3 ubiquitin-protein ligase SH3RF3 (Sh3rf3), found in Mus musculus (Mouse).